The chain runs to 299 residues: Probable lipid kinase YegS (299 aa).

In terms of domain architecture, DAGKc spans 2 to 133 (ANFPASLLIL…IDMARVNDKT (132 aa)). Residues Thr-40, 66 to 72 (GDGTINE), and Thr-95 each bind ATP. Mg(2+) contacts are provided by Leu-215, Asp-218, and Leu-220. The active-site Proton acceptor is Glu-271.

This sequence belongs to the diacylglycerol/lipid kinase family. YegS lipid kinase subfamily. The cofactor is Mg(2+). Requires Ca(2+) as cofactor.

The protein resides in the cytoplasm. Functionally, probably phosphorylates lipids; the in vivo substrate is unknown. The polypeptide is Probable lipid kinase YegS (Salmonella newport (strain SL254)).